The chain runs to 255 residues: Large ribosomal subunit protein uL4 (255 aa).

Belongs to the universal ribosomal protein uL4 family. Part of the 50S ribosomal subunit.

One of the primary rRNA binding proteins, this protein initially binds near the 5'-end of the 23S rRNA. It is important during the early stages of 50S assembly. It makes multiple contacts with different domains of the 23S rRNA in the assembled 50S subunit and ribosome. Functionally, forms part of the polypeptide exit tunnel. The protein is Large ribosomal subunit protein uL4 of Thermoplasma acidophilum (strain ATCC 25905 / DSM 1728 / JCM 9062 / NBRC 15155 / AMRC-C165).